A 239-amino-acid polypeptide reads, in one-letter code: Enolase-phosphatase E1 (239 aa).

The protein belongs to the HAD-like hydrolase superfamily. MasA/MtnC family. Monomer. Mg(2+) is required as a cofactor.

The catalysed reaction is 5-methylsulfanyl-2,3-dioxopentyl phosphate + H2O = 1,2-dihydroxy-5-(methylsulfanyl)pent-1-en-3-one + phosphate. The protein operates within amino-acid biosynthesis; L-methionine biosynthesis via salvage pathway; L-methionine from S-methyl-5-thio-alpha-D-ribose 1-phosphate: step 3/6. Its pathway is amino-acid biosynthesis; L-methionine biosynthesis via salvage pathway; L-methionine from S-methyl-5-thio-alpha-D-ribose 1-phosphate: step 4/6. In terms of biological role, bifunctional enzyme that catalyzes the enolization of 2,3-diketo-5-methylthiopentyl-1-phosphate (DK-MTP-1-P) into the intermediate 2-hydroxy-3-keto-5-methylthiopentenyl-1-phosphate (HK-MTPenyl-1-P), which is then dephosphorylated to form the acireductone 1,2-dihydroxy-3-keto-5-methylthiopentene (DHK-MTPene). The sequence is that of Enolase-phosphatase E1 from Streptomyces avermitilis (strain ATCC 31267 / DSM 46492 / JCM 5070 / NBRC 14893 / NCIMB 12804 / NRRL 8165 / MA-4680).